Reading from the N-terminus, the 317-residue chain is Acetyl-coenzyme A carboxylase carboxyl transferase subunit alpha (317 aa).

The region spanning 43-293 is the CoA carboxyltransferase C-terminal domain; that stretch reads RVRESMADIY…GDVISNALGE (251 aa).

The protein belongs to the AccA family. As to quaternary structure, acetyl-CoA carboxylase is a heterohexamer composed of biotin carboxyl carrier protein (AccB), biotin carboxylase (AccC) and two subunits each of ACCase subunit alpha (AccA) and ACCase subunit beta (AccD).

It localises to the cytoplasm. The catalysed reaction is N(6)-carboxybiotinyl-L-lysyl-[protein] + acetyl-CoA = N(6)-biotinyl-L-lysyl-[protein] + malonyl-CoA. It functions in the pathway lipid metabolism; malonyl-CoA biosynthesis; malonyl-CoA from acetyl-CoA: step 1/1. Its function is as follows. Component of the acetyl coenzyme A carboxylase (ACC) complex. First, biotin carboxylase catalyzes the carboxylation of biotin on its carrier protein (BCCP) and then the CO(2) group is transferred by the carboxyltransferase to acetyl-CoA to form malonyl-CoA. In Rhizobium rhizogenes (strain K84 / ATCC BAA-868) (Agrobacterium radiobacter), this protein is Acetyl-coenzyme A carboxylase carboxyl transferase subunit alpha.